A 406-amino-acid polypeptide reads, in one-letter code: Cholinephosphotransferase 1 (406 aa).

A2 carries the N-acetylalanine modification. Over 2-62 (AAGAGARPAP…LLQWIPLWMA (61 aa)) the chain is Cytoplasmic. The helical transmembrane segment at 63–83 (PNSITLLGLAINMLTTLVLIS) threads the bilayer. N64 provides a ligand contact to CDP-choline. Topologically, residues 84–93 (YCPTVTEEAP) are lumenal. Residues 94 to 118 (YWTYLLCALGLFIYQSLDAIDGKQA) form a helical membrane-spanning segment. Residues D111 and D114 each contribute to the Mg(2+) site. R119 provides a ligand contact to CDP-choline. Residues 119–125 (RRTNSCS) are Cytoplasmic-facing. Residues 126-150 (PLGELFDHGCDSLSTVFMAVGASIA) form a helical membrane-spanning segment. Mg(2+) is bound at residue D132. Catalysis depends on H133, which acts as the Proton acceptor. A Mg(2+)-binding site is contributed by D136. The Lumenal segment spans residues 151–160 (VRLGTHPDWL). The chain crosses the membrane as a helical span at residues 161-179 (FFCSFIGMFMFYCAHWQTY). The Cytoplasmic portion of the chain corresponds to 180–190 (VSGVLRFGKVD). Residues 191–207 (VTEIQIALVIVFVLSTF) form a helical membrane-spanning segment. The Lumenal segment spans residues 208–222 (GGATMWDYTIPILEI). A helical transmembrane segment spans residues 223-248 (KLKILPVLGVVGGAIFSCSNYFHVIL). Residues 249–265 (HGGVGKNGSTIAGTSVL) are Cytoplasmic-facing. A helical transmembrane segment spans residues 266-281 (SPGLHIGIIIILAIMI). Over 282–293 (YKKSATNLFEKH) the chain is Lumenal. Residues 294 to 316 (PCLYTLMFGCVFAKVSQKLVIAH) traverse the membrane as a helical segment. Residues 317-329 (MTKSELYLQDTVF) lie on the Cytoplasmic side of the membrane. Residues 330-339 (IGPGLLFLDQ) form a helical membrane-spanning segment. At 340–346 (YFNNFVD) the chain is on the lumenal side. Residues 347–376 (EYIVLWIAMVISSLDMMRYFSALCLQISRH) traverse the membrane as a helical segment. The Cytoplasmic segment spans residues 377-406 (LHLSIFKTSCHQAPEQVQVLPPKSHQNNMD).

This sequence belongs to the CDP-alcohol phosphatidyltransferase class-I family. Mg(2+) serves as cofactor. The cofactor is Mn(2+).

The protein localises to the golgi apparatus membrane. The enzyme catalyses CDP-choline + a 1,2-diacyl-sn-glycerol = a 1,2-diacyl-sn-glycero-3-phosphocholine + CMP + H(+). It catalyses the reaction 1-octadecanoyl-2-(5Z,8Z,11Z,14Z-eicosatetraenoyl)-sn-glycerol + CDP-choline = 1-octadecanoyl-2-(5Z,8Z,11Z,14Z-eicosatetraenoyl)-sn-glycero-3-phosphocholine + CMP + H(+). It carries out the reaction 1-hexadecanoyl-2-(9Z-octadecenoyl)-sn-glycerol + CDP-choline = 1-hexadecanoyl-2-(9Z-octadecenoyl)-sn-glycero-3-phosphocholine + CMP + H(+). The catalysed reaction is 1-hexadecanoyl-2-(4Z,7Z,10Z,13Z,16Z,19Z-docosahexaenoyl)-sn-glycerol + CDP-choline = 1-hexadecanoyl-2-(4Z,7Z,10Z,13Z,16Z,19Z-docosahexaenoyl)-sn-glycero-3-phosphocholine + CMP + H(+). The enzyme catalyses 1,2-dioctanoyl-sn-glycerol + CDP-choline = 1,2-dioctanoyl-sn-glycero-3-phosphocholine + CMP + H(+). It participates in phospholipid metabolism; phosphatidylcholine biosynthesis; phosphatidylcholine from phosphocholine: step 2/2. Catalyzes the final step of de novo phosphatidylcholine (PC) synthesis, i.e. the transfer of choline phosphate from CDP-choline to the free hydroxyl of a diacylglycerol (DAG), producing a PC. It thereby plays a central role in the formation and maintenance of vesicular membranes. The sequence is that of Cholinephosphotransferase 1 (CHPT1) from Bos taurus (Bovine).